Reading from the N-terminus, the 286-residue chain is Bifunctional protein FolD (286 aa).

NADP(+)-binding positions include 165–167, Ser190, and Val231; that span reads GRS.

It belongs to the tetrahydrofolate dehydrogenase/cyclohydrolase family. Homodimer.

It carries out the reaction (6R)-5,10-methylene-5,6,7,8-tetrahydrofolate + NADP(+) = (6R)-5,10-methenyltetrahydrofolate + NADPH. The catalysed reaction is (6R)-5,10-methenyltetrahydrofolate + H2O = (6R)-10-formyltetrahydrofolate + H(+). It participates in one-carbon metabolism; tetrahydrofolate interconversion. In terms of biological role, catalyzes the oxidation of 5,10-methylenetetrahydrofolate to 5,10-methenyltetrahydrofolate and then the hydrolysis of 5,10-methenyltetrahydrofolate to 10-formyltetrahydrofolate. In Bacillus cereus (strain ATCC 10987 / NRS 248), this protein is Bifunctional protein FolD.